The following is a 256-amino-acid chain: MGQKTNPNGLRLGIIRTWESKWYADQKDVPALIKEDALIREFLNENFSKAGVSQIEIERVKAKSKERVTIKLYVSKPGIALGKEASVKNKAVSTLEYLTKKEVILNIIEVRRPEKVAVLVAQSIAEQLENRASFRRAQKMAIQRALKSGAKGIRTLVSGRLGGAEMARSEGYSEGRVPLHTLRADVDYATAEAKTTYGILGIKVWIYHGEVLPGQSILDTRKPFEAGNQKRGQKRRPRNDQPGQRPQQRNRNSKED.

The 73-residue stretch at Ile-39–Arg-111 folds into the KH type-2 domain. Positions Asp-219 to Asp-256 are disordered. The span at Asp-240–Asn-250 shows a compositional bias: low complexity.

The protein belongs to the universal ribosomal protein uS3 family. In terms of assembly, part of the 30S ribosomal subunit. Forms a tight complex with proteins S10 and S14.

Binds the lower part of the 30S subunit head. Binds mRNA in the 70S ribosome, positioning it for translation. This is Small ribosomal subunit protein uS3 from Acholeplasma laidlawii (strain PG-8A).